A 399-amino-acid polypeptide reads, in one-letter code: Elongation factor Tu (399 aa).

A tr-type G domain is found at lysine 10 to glutamate 209. The G1 stretch occupies residues glycine 19–threonine 26. Glycine 19–threonine 26 provides a ligand contact to GTP. Threonine 26 is a binding site for Mg(2+). A G2 region spans residues glycine 60–asparagine 64. Residues aspartate 81–glycine 84 form a G3 region. Residues aspartate 81–histidine 85 and asparagine 136–aspartate 139 contribute to the GTP site. The segment at asparagine 136–aspartate 139 is G4. A G5 region spans residues serine 174–leucine 176.

It belongs to the TRAFAC class translation factor GTPase superfamily. Classic translation factor GTPase family. EF-Tu/EF-1A subfamily. Monomer.

The protein localises to the cytoplasm. The catalysed reaction is GTP + H2O = GDP + phosphate + H(+). Functionally, GTP hydrolase that promotes the GTP-dependent binding of aminoacyl-tRNA to the A-site of ribosomes during protein biosynthesis. The polypeptide is Elongation factor Tu (Nautilia profundicola (strain ATCC BAA-1463 / DSM 18972 / AmH)).